A 481-amino-acid polypeptide reads, in one-letter code: Aspartyl/glutamyl-tRNA(Asn/Gln) amidotransferase subunit B (481 aa).

Belongs to the GatB/GatE family. GatB subfamily. In terms of assembly, heterotrimer of A, B and C subunits.

It carries out the reaction L-glutamyl-tRNA(Gln) + L-glutamine + ATP + H2O = L-glutaminyl-tRNA(Gln) + L-glutamate + ADP + phosphate + H(+). The catalysed reaction is L-aspartyl-tRNA(Asn) + L-glutamine + ATP + H2O = L-asparaginyl-tRNA(Asn) + L-glutamate + ADP + phosphate + 2 H(+). Its function is as follows. Allows the formation of correctly charged Asn-tRNA(Asn) or Gln-tRNA(Gln) through the transamidation of misacylated Asp-tRNA(Asn) or Glu-tRNA(Gln) in organisms which lack either or both of asparaginyl-tRNA or glutaminyl-tRNA synthetases. The reaction takes place in the presence of glutamine and ATP through an activated phospho-Asp-tRNA(Asn) or phospho-Glu-tRNA(Gln). The sequence is that of Aspartyl/glutamyl-tRNA(Asn/Gln) amidotransferase subunit B from Pseudomonas syringae pv. tomato (strain ATCC BAA-871 / DC3000).